The sequence spans 406 residues: NAC transcription factor NAM-B1 (406 aa).

A compositionally biased stretch (polar residues) spans M1–A11. The tract at residues M1–R40 is disordered. The 170-residue stretch at L35–K204 folds into the NAC domain. Residues V137–A210 mediate DNA binding.

It localises to the nucleus. Its function is as follows. Transcription factor of the NAC family associated with the grain protein content (GPC). Sequences of the 11 European varieties of H.vulgare tested belongs to the same haplotype while the sequence found in H.spontaneum, an ancestor of the cultivated H.vulgare which has a higher GPC, belongs to an other haplotype. This chain is NAC transcription factor NAM-B1 (NAM-B1), found in Hordeum vulgare subsp. spontaneum (Wild barley).